Here is a 487-residue protein sequence, read N- to C-terminus: Spermatogenesis-associated protein 6 (487 aa).

An N-terminal signal peptide occupies residues 1-17 (MPKVKALQCALALEIRS). The disordered stretch occupies residues 170–221 (APVEKPHSRLQNRTSRSQKKKSKSPERNKYCINAKNYEQPTTSKSHSPSPYT). A glycan (N-linked (GlcNAc...) asparagine) is linked at Asn-181. Residues 205-219 (NYEQPTTSKSHSPSP) show a composition bias toward polar residues. Ser-216 and Ser-218 each carry phosphoserine. Residue Lys-247 forms a Glycyl lysine isopeptide (Lys-Gly) (interchain with G-Cter in SUMO2) linkage. Phosphoserine occurs at positions 264, 273, 324, 342, 345, 353, 423, 464, and 486.

Belongs to the SPATA6 family. As to quaternary structure, interacts with MYL6.

It is found in the secreted. It localises to the cell projection. Its subcellular location is the cilium. The protein resides in the flagellum. Functionally, required for formation of the sperm connecting piece during spermiogenesis. Sperm connecting piece is essential for linking the developing flagellum to the head during late spermiogenesis. May be involved in myosin-based microfilament transport through interaction with myosin subunits. This chain is Spermatogenesis-associated protein 6 (SPATA6), found in Bos taurus (Bovine).